Reading from the N-terminus, the 351-residue chain is UDP-N-acetylglucosamine--N-acetylmuramyl-(pentapeptide) pyrophosphoryl-undecaprenol N-acetylglucosamine transferase (351 aa).

Residues 11 to 13 (TGG), Asn120, Arg161, Ser187, and Gln281 each bind UDP-N-acetyl-alpha-D-glucosamine.

The protein belongs to the glycosyltransferase 28 family. MurG subfamily.

It is found in the cell inner membrane. It carries out the reaction di-trans,octa-cis-undecaprenyl diphospho-N-acetyl-alpha-D-muramoyl-L-alanyl-D-glutamyl-meso-2,6-diaminopimeloyl-D-alanyl-D-alanine + UDP-N-acetyl-alpha-D-glucosamine = di-trans,octa-cis-undecaprenyl diphospho-[N-acetyl-alpha-D-glucosaminyl-(1-&gt;4)]-N-acetyl-alpha-D-muramoyl-L-alanyl-D-glutamyl-meso-2,6-diaminopimeloyl-D-alanyl-D-alanine + UDP + H(+). Its pathway is cell wall biogenesis; peptidoglycan biosynthesis. Functionally, cell wall formation. Catalyzes the transfer of a GlcNAc subunit on undecaprenyl-pyrophosphoryl-MurNAc-pentapeptide (lipid intermediate I) to form undecaprenyl-pyrophosphoryl-MurNAc-(pentapeptide)GlcNAc (lipid intermediate II). This chain is UDP-N-acetylglucosamine--N-acetylmuramyl-(pentapeptide) pyrophosphoryl-undecaprenol N-acetylglucosamine transferase, found in Rippkaea orientalis (strain PCC 8801 / RF-1) (Cyanothece sp. (strain PCC 8801)).